The primary structure comprises 392 residues: Alkaline phosphatase L (392 aa).

A signal peptide spans 1–23 (MYKRSLIAASLSVAALVSAQAMA).

It belongs to the PstS family. As to quaternary structure, homodimer.

Its subcellular location is the secreted. The protein localises to the periplasm. The catalysed reaction is a phosphate monoester + H2O = an alcohol + phosphate. Its function is as follows. Has both a phosphomonoesterase and phosphodiesterase activity. The polypeptide is Alkaline phosphatase L (Pseudomonas aeruginosa).